Consider the following 64-residue polypeptide: Large ribosomal subunit protein bL35 (64 aa).

Basic residues predominate over residues 1 to 26; it reads MPKIKTHRGAAKRFKKTGTGKIKRSK. The segment at 1–48 is disordered; sequence MPKIKTHRGAAKRFKKTGTGKIKRSKAYASHLLGGKSPKRKRNLRKAG.

The protein belongs to the bacterial ribosomal protein bL35 family.

The polypeptide is Large ribosomal subunit protein bL35 (Syntrophomonas wolfei subsp. wolfei (strain DSM 2245B / Goettingen)).